The chain runs to 314 residues: Probable UDP-sugar transporter protein SLC35A4 (314 aa).

Residues 1 to 20 (MIAISADESPESSSPALRLR) lie on the Cytoplasmic side of the membrane. The helical transmembrane segment at 21–41 (WLFLLLLLVLIYGSHAPLLSL) threads the bilayer. At 42–54 (CKTQAQIPFSASS) the chain is on the lumenal side. A helical membrane pass occupies residues 55-75 (CVLLIETSKLFISFASLLASG). The Cytoplasmic segment spans residues 76-88 (SVSTLRISISMTT). The helical transmembrane segment at 89 to 109 (ASPYAVPAVLYAFNNHLVVFM) threads the bilayer. Topologically, residues 110 to 145 (QAYMDPSSFQVLSNLKIASTALLYTSCLGKRLHRRQ) are lumenal. The helical transmembrane segment at 146–166 (WFAMGLLVSAGVSHSCFSYDL) threads the bilayer. The Cytoplasmic portion of the chain corresponds to 167–175 (EGKRETAVY). A helical membrane pass occupies residues 176 to 196 (ITSWGLLLVLVYCFVSGLAAV). Residues 197-206 (YTERVLKSQR) are Lumenal-facing. A helical transmembrane segment spans residues 207 to 227 (LPLSMQNLFLYTFGVVVNLAS). The Cytoplasmic segment spans residues 228-242 (HLSGGEQKGFFEGYS). A helical membrane pass occupies residues 243–263 (AVVWVIVAGQVANGLLMSVVM). Residues 264–267 (KHGT) are Lumenal-facing. Residues 268 to 290 (GITRLFVISSAMLVNAVLSWGIL) form a helical membrane-spanning segment. Over 291–314 (GVQLTGYFLFPVVLIGWAVYLYYT) the chain is Cytoplasmic.

The protein belongs to the nucleotide-sugar transporter family. SLC35A subfamily.

It is found in the golgi apparatus membrane. The catalysed reaction is CDP-L-ribitol(in) + CDP(out) = CDP-L-ribitol(out) + CDP(in). Mediates the transport of CDP-ribitol. Does not exhibit CMP-sialic acid, UDP-galactose and UDP-N-acetylglucosamine transport activity. The sequence is that of Probable UDP-sugar transporter protein SLC35A4 from Danio rerio (Zebrafish).